A 459-amino-acid polypeptide reads, in one-letter code: Chaperone SurA (459 aa).

The signal sequence occupies residues M1 to A23. 2 PpiC domains span residues V197–E301 and V312–E411.

It localises to the periplasm. The enzyme catalyses [protein]-peptidylproline (omega=180) = [protein]-peptidylproline (omega=0). Its function is as follows. Chaperone involved in the correct folding and assembly of outer membrane proteins. Recognizes specific patterns of aromatic residues and the orientation of their side chains, which are found more frequently in integral outer membrane proteins. May act in both early periplasmic and late outer membrane-associated steps of protein maturation. This Albidiferax ferrireducens (strain ATCC BAA-621 / DSM 15236 / T118) (Rhodoferax ferrireducens) protein is Chaperone SurA.